We begin with the raw amino-acid sequence, 138 residues long: MAREFSRTDRVGQQIHKEIASILQNEFKNRDPRLGMVTVSAVEVSRDLAYTKIYVTFFENDEEVMDNYLSILEENKGYIRTLLANRMRMRAVPAIKFVRDGSLSEGIRISNLVDETLNKDKERARNAGRSLDEDEQED.

The protein belongs to the RbfA family. As to quaternary structure, monomer. Binds 30S ribosomal subunits, but not 50S ribosomal subunits or 70S ribosomes.

The protein localises to the cytoplasm. Its function is as follows. One of several proteins that assist in the late maturation steps of the functional core of the 30S ribosomal subunit. Associates with free 30S ribosomal subunits (but not with 30S subunits that are part of 70S ribosomes or polysomes). Required for efficient processing of 16S rRNA. May interact with the 5'-terminal helix region of 16S rRNA. This Pseudoalteromonas atlantica (strain T6c / ATCC BAA-1087) protein is Ribosome-binding factor A.